A 192-amino-acid polypeptide reads, in one-letter code: Phosphoheptose isomerase (192 aa).

The SIS domain maps to 37 to 192; sequence LADSFKAGGK…IQLIEKEMVK (156 aa). 52–54 contacts substrate; it reads NGG. Zn(2+)-binding residues include H61 and E65. Substrate is bound by residues E65, 93-94, 119-121, S124, and Q172; these read ND and STS. Residues Q172 and H180 each coordinate Zn(2+).

The protein belongs to the SIS family. GmhA subfamily. As to quaternary structure, homotetramer. It depends on Zn(2+) as a cofactor.

It is found in the cytoplasm. The enzyme catalyses 2 D-sedoheptulose 7-phosphate = D-glycero-alpha-D-manno-heptose 7-phosphate + D-glycero-beta-D-manno-heptose 7-phosphate. The protein operates within carbohydrate biosynthesis; D-glycero-D-manno-heptose 7-phosphate biosynthesis; D-glycero-alpha-D-manno-heptose 7-phosphate and D-glycero-beta-D-manno-heptose 7-phosphate from sedoheptulose 7-phosphate: step 1/1. Its function is as follows. Catalyzes the isomerization of sedoheptulose 7-phosphate in D-glycero-D-manno-heptose 7-phosphate. In Enterobacter sp. (strain 638), this protein is Phosphoheptose isomerase.